Consider the following 559-residue polypeptide: MAAVQATTGIQANTKTSAEPVRPLANFPPSVWGDRFLSFSLDKSEFERYAIAMEKPKEDVRKLIVDSTMDSNEKLGLIYSVHRVGLTYMFLQEIESQLDKLFNEFSLQDYEEVDLYTISINFQVFRHLGYKLPCDVFKKFKDAISGTFKESITSDVRGMLGLYESAQLRIRGEKILDEASVFIEGKLKSVVNTLEGNLAQQVKQSLRRPFHQGMPMVEARLYFSNYEEECSSHDSLFKLAKLHFKYLELQQKEELRIVTKWYKDMRFQETTPYIRDRVPEIYLWILGLYFEPRYSLARIIATKITLFLVVLDDTYDAYATIEEIRLLTDAMNKWDISAMEQIPEYIRPFYKVLLDEYAEIGKRMAKEGRADTVIASKEAFQDIARGYLEEAEWTNSGYVASFPEYMKNGLITSAYNVISKSALVGMGEIVSEDALAWYESHPKPLQASELISRLQDDVMTYQFERERGQSATGVDAYIKTYGVSEKKAIDELKIMIENAWKDINEGCLKPRQVSMDLLAPILNLARMIDVVYRYDDGFTFPGSTLKEYINLLFVDSLPV.

5 residues coordinate Mg(2+): Asp312, Asp316, Asp456, Thr460, and Glu464. Positions 312 to 316 (DDTYD) match the DDXXD motif motif.

The protein belongs to the terpene synthase family. In terms of assembly, monomer. Mg(2+) serves as cofactor. Expressed in glandular trichomes of all aerial tissues, with highest levels in tissues accumulating parthenolide (e.g. flowers and, to some extent, leaves).

It carries out the reaction (2E,6E)-farnesyl diphosphate = (+)-(R)-germacrene A + diphosphate. It participates in secondary metabolite biosynthesis; terpenoid biosynthesis. Functionally, sesquiterpene synthase involved in germacrene A biosynthesis. Germacrene A is a precursor of several sesquiterpene lactones. This Tanacetum parthenium (Feverfew) protein is Germacrene A synthase.